Reading from the N-terminus, the 473-residue chain is Adenosylhomocysteinase (473 aa).

Positions 64, 139, and 199 each coordinate substrate. 200-202 (TTT) lines the NAD(+) pocket. Lysine 229 and aspartate 233 together coordinate substrate. Residues asparagine 234, 263–268 (GYGDVG), glutamate 286, asparagine 321, 342–344 (IGH), and asparagine 387 each bind NAD(+).

Belongs to the adenosylhomocysteinase family. NAD(+) is required as a cofactor.

It localises to the cytoplasm. The catalysed reaction is S-adenosyl-L-homocysteine + H2O = L-homocysteine + adenosine. It functions in the pathway amino-acid biosynthesis; L-homocysteine biosynthesis; L-homocysteine from S-adenosyl-L-homocysteine: step 1/1. Its function is as follows. May play a key role in the regulation of the intracellular concentration of adenosylhomocysteine. The polypeptide is Adenosylhomocysteinase (Burkholderia thailandensis (strain ATCC 700388 / DSM 13276 / CCUG 48851 / CIP 106301 / E264)).